The chain runs to 133 residues: Fatty acid-binding protein, heart (133 aa).

An N-acetylvaline modification is found at Val-2. Position 8 is a phosphothreonine (Thr-8). Tyr-20 carries the phosphotyrosine; by Tyr-kinases modification. Phosphoserine is present on Ser-23. Thr-30 bears the Phosphothreonine mark. Ser-83 is modified (phosphoserine). 127–129 (RTY) is a binding site for (9Z)-octadecenoate. Residue 127 to 129 (RTY) coordinates hexadecanoate. 127-129 (RTY) serves as a coordination point for octadecanoate.

This sequence belongs to the calycin superfamily. Fatty-acid binding protein (FABP) family.

It is found in the cytoplasm. FABPs are thought to play a role in the intracellular transport of long-chain fatty acids and their acyl-CoA esters. The protein is Fatty acid-binding protein, heart (FABP3) of Sus scrofa (Pig).